A 405-amino-acid chain; its full sequence is Mevalonate 3,5-bisphosphate decarboxylase (405 aa).

This sequence belongs to the mevalonate 3,5-bisphosphate decarboxylase family. In terms of assembly, homodimer.

It carries out the reaction (R)-3,5-bisphosphomevalonate + H(+) = isopentenyl phosphate + phosphate + CO2. It participates in isoprenoid biosynthesis; isopentenyl diphosphate biosynthesis via mevalonate pathway. Catalyzes the ATP-independent decarboxylation of (R)-mevalonate 3,5-bisphosphate to isopentenyl phosphate. Functions in an alternative mevalonate pathway, only present in extreme acidophiles of the Thermoplasmatales order, which passes through mevalonate 3-phosphate rather than mevalonate 5-phosphate. The sequence is that of Mevalonate 3,5-bisphosphate decarboxylase from Thermoplasma acidophilum (strain ATCC 25905 / DSM 1728 / JCM 9062 / NBRC 15155 / AMRC-C165).